The primary structure comprises 96 residues: MAKYEILYIIRPNIEEEAKNALVARFDSILTDNGATVVESKTWEKRRLAYEIQDFREGLYHIVXVEANDDAALKEFDRLSKINADILRHMIVKIDA.

It belongs to the bacterial ribosomal protein bS6 family.

Functionally, binds together with bS18 to 16S ribosomal RNA. The chain is Small ribosomal subunit protein bS6 from Streptococcus pneumoniae serotype 19F (strain G54).